The primary structure comprises 167 residues: UPF0254 protein MJ1251 (167 aa).

This sequence belongs to the UPF0254 family.

This chain is UPF0254 protein MJ1251, found in Methanocaldococcus jannaschii (strain ATCC 43067 / DSM 2661 / JAL-1 / JCM 10045 / NBRC 100440) (Methanococcus jannaschii).